We begin with the raw amino-acid sequence, 211 residues long: ATP phosphoribosyltransferase (211 aa).

This sequence belongs to the ATP phosphoribosyltransferase family. Short subfamily. In terms of assembly, heteromultimer composed of HisG and HisZ subunits.

It localises to the cytoplasm. The catalysed reaction is 1-(5-phospho-beta-D-ribosyl)-ATP + diphosphate = 5-phospho-alpha-D-ribose 1-diphosphate + ATP. It participates in amino-acid biosynthesis; L-histidine biosynthesis; L-histidine from 5-phospho-alpha-D-ribose 1-diphosphate: step 1/9. Functionally, catalyzes the condensation of ATP and 5-phosphoribose 1-diphosphate to form N'-(5'-phosphoribosyl)-ATP (PR-ATP). Has a crucial role in the pathway because the rate of histidine biosynthesis seems to be controlled primarily by regulation of HisG enzymatic activity. This Pseudomonas putida (strain W619) protein is ATP phosphoribosyltransferase.